A 164-amino-acid polypeptide reads, in one-letter code: CASP-like protein 1C2 (164 aa).

At 1-8 the chain is on the cytoplasmic side; it reads MVKLTQRL. The helical transmembrane segment at 9–29 threads the bilayer; sequence GGLVLRFAAFCAALGAVIAMI. The Extracellular segment spans residues 30–51; it reads TSRERSSFFVISLVAKYSDLAA. Residues 52 to 72 traverse the membrane as a helical segment; sequence FKYFVIANAIVTVYSFLVLFL. At 73–80 the chain is on the cytoplasmic side; the sequence is PKESLLWK. A helical membrane pass occupies residues 81–101; it reads FVVVLDLMVTMLLTSSLSAAV. Residues 102–129 are Extracellular-facing; it reads AVAQVGKRGNANAGWLPICGQVPRFCDQ. A helical transmembrane segment spans residues 130–150; the sequence is ITGALIAGLVALVLYVFLLIF. Topologically, residues 151–164 are cytoplasmic; it reads SIHHVVDPFLLRKS.

This sequence belongs to the Casparian strip membrane proteins (CASP) family. Homodimer and heterodimers.

It localises to the cell membrane. This is CASP-like protein 1C2 from Arabidopsis thaliana (Mouse-ear cress).